The sequence spans 252 residues: Imidazole glycerol phosphate synthase subunit HisF (252 aa).

Residues D11 and D130 contribute to the active site.

Belongs to the HisA/HisF family. As to quaternary structure, heterodimer of HisH and HisF.

Its subcellular location is the cytoplasm. It catalyses the reaction 5-[(5-phospho-1-deoxy-D-ribulos-1-ylimino)methylamino]-1-(5-phospho-beta-D-ribosyl)imidazole-4-carboxamide + L-glutamine = D-erythro-1-(imidazol-4-yl)glycerol 3-phosphate + 5-amino-1-(5-phospho-beta-D-ribosyl)imidazole-4-carboxamide + L-glutamate + H(+). Its pathway is amino-acid biosynthesis; L-histidine biosynthesis; L-histidine from 5-phospho-alpha-D-ribose 1-diphosphate: step 5/9. In terms of biological role, IGPS catalyzes the conversion of PRFAR and glutamine to IGP, AICAR and glutamate. The HisF subunit catalyzes the cyclization activity that produces IGP and AICAR from PRFAR using the ammonia provided by the HisH subunit. This chain is Imidazole glycerol phosphate synthase subunit HisF, found in Rhodospirillum rubrum (strain ATCC 11170 / ATH 1.1.1 / DSM 467 / LMG 4362 / NCIMB 8255 / S1).